We begin with the raw amino-acid sequence, 562 residues long: Formate--tetrahydrofolate ligase (562 aa).

70-77 (TPAGEGKS) lines the ATP pocket.

This sequence belongs to the formate--tetrahydrofolate ligase family.

The enzyme catalyses (6S)-5,6,7,8-tetrahydrofolate + formate + ATP = (6R)-10-formyltetrahydrofolate + ADP + phosphate. It functions in the pathway one-carbon metabolism; tetrahydrofolate interconversion. This is Formate--tetrahydrofolate ligase from Paenarthrobacter aurescens (strain TC1).